The following is a 362-amino-acid chain: Chorismate synthase (362 aa).

NADP(+) contacts are provided by Arg48 and Arg54. Residues 125–127, 238–239, Gly278, 293–297, and Arg319 contribute to the FMN site; these read RSS, NA, and KPTSS.

The protein belongs to the chorismate synthase family. As to quaternary structure, homotetramer. Requires FMNH2 as cofactor.

The enzyme catalyses 5-O-(1-carboxyvinyl)-3-phosphoshikimate = chorismate + phosphate. It participates in metabolic intermediate biosynthesis; chorismate biosynthesis; chorismate from D-erythrose 4-phosphate and phosphoenolpyruvate: step 7/7. Catalyzes the anti-1,4-elimination of the C-3 phosphate and the C-6 proR hydrogen from 5-enolpyruvylshikimate-3-phosphate (EPSP) to yield chorismate, which is the branch point compound that serves as the starting substrate for the three terminal pathways of aromatic amino acid biosynthesis. This reaction introduces a second double bond into the aromatic ring system. The protein is Chorismate synthase of Tolumonas auensis (strain DSM 9187 / NBRC 110442 / TA 4).